Consider the following 122-residue polypeptide: Large ribosomal subunit protein uL24 (122 aa).

The tract at residues 43-64 (IRKHHRRDMPTPQGGTTKGGII) is disordered.

Belongs to the universal ribosomal protein uL24 family. As to quaternary structure, part of the 50S ribosomal subunit.

Functionally, one of two assembly initiator proteins, it binds directly to the 5'-end of the 23S rRNA, where it nucleates assembly of the 50S subunit. In terms of biological role, one of the proteins that surrounds the polypeptide exit tunnel on the outside of the subunit. In Cutibacterium acnes (strain DSM 16379 / KPA171202) (Propionibacterium acnes), this protein is Large ribosomal subunit protein uL24.